The following is a 123-amino-acid chain: Chondroitin proteoglycan 8 (123 aa).

A signal peptide spans 1-16 (MRPFILLALLFSVAIA). The tract at residues 32 to 123 (SVRRSTRGAD…SGSGDEAPAE (92 aa)) is disordered. Residues 38–60 (RGADKKADSSDSSDSNEKDDKVT) show a composition bias toward basic and acidic residues. O-linked (Xyl...) (chondroitin sulfate) serine glycans are attached at residues Ser63 and Ser65. The segment covering 74–84 (EQLRRVARDVE) has biased composition (basic and acidic residues). O-linked (Xyl...) (chondroitin sulfate) serine glycans are attached at residues Ser87, Ser93, and Ser114.

The chain is Chondroitin proteoglycan 8 (cpg-8) from Caenorhabditis briggsae.